The primary structure comprises 110 residues: Translation initiation factor 1A 3 (110 aa).

Positions 1 to 29 (MIRKRQSGSNKSVSSGNNQEVTRVRTPRK) are disordered. Residues 7–18 (SGSNKSVSSGNN) are compositionally biased toward low complexity. Positions 22–96 (TRVRTPRKDR…SKADVIWKYT (75 aa)) constitute an S1-like domain.

Belongs to the eIF-1A family.

Seems to be required for maximal rate of protein biosynthesis. Enhances ribosome dissociation into subunits and stabilizes the binding of the initiator Met-tRNA(I) to 40 S ribosomal subunits. This is Translation initiation factor 1A 3 (eIF1A3) from Methanosarcina acetivorans (strain ATCC 35395 / DSM 2834 / JCM 12185 / C2A).